A 326-amino-acid chain; its full sequence is MMTAEVTAADAEVLLAQPRGFCAGVDRAIDIVERALELHGAPIYVRHEIVHNRYVVEDLRGKGAVFIDELDQAPAGAIVVFSAHGVSQAVRGEAEARGLRVFDATCPLVTKVHIEVARMRAAGREIVMIGHKGHPEVEGTLGQAQGGMYLVETVEDVAALQVSDPGNLAYVTQTTLSVDDAAAVAGALKARFPGIVEPKKSDICYATQNRQDAVKLLAPECDLVLVVGSTNSSNSNRLREVAERKGVAAYLIDGAHAIDPAWLQGRRSIGITAGASAPEVLVQQVVERVRELGAVSVRTMPGLEESVAFPLPKGLSRKIAQTESLE.

C22 contributes to the [4Fe-4S] cluster binding site. H51 and H84 together coordinate (2E)-4-hydroxy-3-methylbut-2-enyl diphosphate. Dimethylallyl diphosphate is bound by residues H51 and H84. Positions 51 and 84 each coordinate isopentenyl diphosphate. C106 lines the [4Fe-4S] cluster pocket. A (2E)-4-hydroxy-3-methylbut-2-enyl diphosphate-binding site is contributed by H134. Position 134 (H134) interacts with dimethylallyl diphosphate. H134 contacts isopentenyl diphosphate. The active-site Proton donor is the E136. T174 contributes to the (2E)-4-hydroxy-3-methylbut-2-enyl diphosphate binding site. C204 contacts [4Fe-4S] cluster. The (2E)-4-hydroxy-3-methylbut-2-enyl diphosphate site is built by S232, S233, N234, and S276. Dimethylallyl diphosphate contacts are provided by S232, S233, N234, and S276. Isopentenyl diphosphate contacts are provided by S232, S233, N234, and S276.

This sequence belongs to the IspH family. It depends on [4Fe-4S] cluster as a cofactor.

It catalyses the reaction isopentenyl diphosphate + 2 oxidized [2Fe-2S]-[ferredoxin] + H2O = (2E)-4-hydroxy-3-methylbut-2-enyl diphosphate + 2 reduced [2Fe-2S]-[ferredoxin] + 2 H(+). The catalysed reaction is dimethylallyl diphosphate + 2 oxidized [2Fe-2S]-[ferredoxin] + H2O = (2E)-4-hydroxy-3-methylbut-2-enyl diphosphate + 2 reduced [2Fe-2S]-[ferredoxin] + 2 H(+). It participates in isoprenoid biosynthesis; dimethylallyl diphosphate biosynthesis; dimethylallyl diphosphate from (2E)-4-hydroxy-3-methylbutenyl diphosphate: step 1/1. The protein operates within isoprenoid biosynthesis; isopentenyl diphosphate biosynthesis via DXP pathway; isopentenyl diphosphate from 1-deoxy-D-xylulose 5-phosphate: step 6/6. Its function is as follows. Catalyzes the conversion of 1-hydroxy-2-methyl-2-(E)-butenyl 4-diphosphate (HMBPP) into a mixture of isopentenyl diphosphate (IPP) and dimethylallyl diphosphate (DMAPP). Acts in the terminal step of the DOXP/MEP pathway for isoprenoid precursor biosynthesis. The chain is 4-hydroxy-3-methylbut-2-enyl diphosphate reductase from Bordetella parapertussis (strain 12822 / ATCC BAA-587 / NCTC 13253).